The following is a 198-amino-acid chain: Potassium-transporting ATPase KdpC subunit (198 aa).

Residues 8–28 (ILAVLVFTILCGIIYPVSTTV) traverse the membrane as a helical segment.

It belongs to the KdpC family. In terms of assembly, the system is composed of three essential subunits: KdpA, KdpB and KdpC.

It is found in the cell membrane. Part of the high-affinity ATP-driven potassium transport (or Kdp) system, which catalyzes the hydrolysis of ATP coupled with the electrogenic transport of potassium into the cytoplasm. This subunit acts as a catalytic chaperone that increases the ATP-binding affinity of the ATP-hydrolyzing subunit KdpB by the formation of a transient KdpB/KdpC/ATP ternary complex. In Clostridium perfringens (strain ATCC 13124 / DSM 756 / JCM 1290 / NCIMB 6125 / NCTC 8237 / Type A), this protein is Potassium-transporting ATPase KdpC subunit.